Reading from the N-terminus, the 307-residue chain is Dihydroorotate dehydrogenase A (fumarate) (307 aa).

Residues serine 21 and 46–47 (KT) contribute to the FMN site. Substrate-binding positions include lysine 46, 70–74 (NSVGL), and asparagine 130. Asparagine 130 is an FMN binding site. Cysteine 133 (nucleophile) is an active-site residue. FMN is bound by residues lysine 168 and isoleucine 194. 195–196 (NT) serves as a coordination point for substrate. FMN-binding positions include glycine 220, 246 to 247 (GG), and 268 to 269 (GS).

Belongs to the dihydroorotate dehydrogenase family. Type 1 subfamily. In terms of assembly, homodimer. It depends on FMN as a cofactor.

It localises to the cytoplasm. The catalysed reaction is (S)-dihydroorotate + fumarate = orotate + succinate. The protein operates within pyrimidine metabolism; UMP biosynthesis via de novo pathway. Catalyzes the conversion of dihydroorotate to orotate with fumarate as the electron acceptor. This Lactobacillus delbrueckii subsp. bulgaricus (strain ATCC BAA-365 / Lb-18) protein is Dihydroorotate dehydrogenase A (fumarate) (pyrD).